Reading from the N-terminus, the 155-residue chain is Small ribosomal subunit protein uS7 (155 aa).

The protein belongs to the universal ribosomal protein uS7 family. Part of the 30S ribosomal subunit. Contacts proteins S9 and S11.

Functionally, one of the primary rRNA binding proteins, it binds directly to 16S rRNA where it nucleates assembly of the head domain of the 30S subunit. Is located at the subunit interface close to the decoding center, probably blocks exit of the E-site tRNA. This is Small ribosomal subunit protein uS7 from Halorhodospira halophila (strain DSM 244 / SL1) (Ectothiorhodospira halophila (strain DSM 244 / SL1)).